A 3603-amino-acid chain; its full sequence is Plipastatin synthase subunit D (3603 aa).

Residues 7 to 306 (IQDIYPLSYM…NTMPVRVQGA (300 aa)) form a condensation 1 region. The interval 7–1043 (IQDIYPLSYM…ALIIREAEQN (1037 aa)) is domain 1 (proline-activating). Positions 490–889 (TYRELNKAAN…NHPDISEAAI (400 aa)) are adenylation 1. The Carrier 1 domain maps to 966–1041 (APRNLLEAKL…GLALIIREAE (76 aa)). Ser1001 is modified (O-(pantetheine 4'-phosphoryl)serine). Positions 1053–1334 (KRDTYPVSSA…NTLALRTRPA (282 aa)) are condensation 2. The interval 1053-2069 (KRDTYPVSSA…TVEGLATVIR (1017 aa)) is domain 2 (glutamine-activating). Positions 1521–1924 (TYKELNEQAN…SIEGVREAAV (404 aa)) are adenylation 2. Positions 1997-2072 (APRNVTEMKL…GLATVIREGT (76 aa)) constitute a Carrier 2 domain. At Ser2032 the chain carries O-(pantetheine 4'-phosphoryl)serine. The interval 2084–2374 (KQETYPVSSA…NTLALRTRPE (291 aa)) is condensation 3. The segment at 2084–3596 (KQETYPVSSA…ELTEDALQEI (1513 aa)) is domain 3 (proline-activating). The tract at residues 2560-2956 (TYQELDEWSN…CIKGVKDAAV (397 aa)) is adenylation 3. One can recognise a Carrier 3 domain in the interval 3034 to 3108 (PPSSKMEQIL…ELAAYIRDSD (75 aa)). Ser3069 bears the O-(pantetheine 4'-phosphoryl)serine mark. The segment at 3116 to 3596 (VEGDVQWSPV…ELTEDALQEI (481 aa)) is epimerization.

It belongs to the ATP-dependent AMP-binding enzyme family. The cofactor is pantetheine 4'-phosphate.

Functionally, this protein is a multifunctional enzyme, able to activate and polymerize the amino acids Pro, Gln and Tyr as part of the biosynthesis of the lipopeptide antibiotic plipastatin. The Tyr residue is further epimerized to the D-isomer form. The activation sites for these amino acids consist of individual domains. This chain is Plipastatin synthase subunit D (ppsD), found in Bacillus subtilis (strain 168).